Reading from the N-terminus, the 653-residue chain is Mannosyl-oligosaccharide 1,2-alpha-mannosidase IA (653 aa).

At 1–41 the chain is on the cytoplasmic side; the sequence is MPVGGLLPLFSSPAGGVLGGGLGGGGGRKGSGPAALRLTEK. The chain crosses the membrane as a helical; Signal-anchor for type II membrane protein span at residues 42-62; it reads FVLLLVFSAFITLCFGAIFFL. Residues 63–653 lie on the Lumenal side of the membrane; that stretch reads PDSSKLLSGV…DKKEVEIREE (591 aa). Residues 81–116 are disordered; that stretch reads QPAADHKPGPGARAEDAAEGRARRREEGAPGDPEAA. Residues 84–108 are compositionally biased toward basic and acidic residues; the sequence is ADHKPGPGARAEDAAEGRARRREEG. An intrachain disulfide couples cysteine 476 to cysteine 508. Residue asparagine 513 is glycosylated (N-linked (GlcNAc...) asparagine). Residue glutamate 522 is the Proton donor of the active site.

The protein belongs to the glycosyl hydrolase 47 family. It depends on Ca(2+) as a cofactor.

It localises to the golgi apparatus membrane. The catalysed reaction is N(4)-(alpha-D-Man-(1-&gt;2)-alpha-D-Man-(1-&gt;2)-alpha-D-Man-(1-&gt;3)-[alpha-D-Man-(1-&gt;2)-alpha-D-Man-(1-&gt;3)-[alpha-D-Man-(1-&gt;2)-alpha-D-Man-(1-&gt;6)]-alpha-D-Man-(1-&gt;6)]-beta-D-Man-(1-&gt;4)-beta-D-GlcNAc-(1-&gt;4)-beta-D-GlcNAc)-L-asparaginyl-[protein] (N-glucan mannose isomer 9A1,2,3B1,2,3) + 4 H2O = N(4)-(alpha-D-Man-(1-&gt;3)-[alpha-D-Man-(1-&gt;3)-[alpha-D-Man-(1-&gt;6)]-alpha-D-Man-(1-&gt;6)]-beta-D-Man-(1-&gt;4)-beta-D-GlcNAc-(1-&gt;4)-beta-D-GlcNAc)-L-asparaginyl-[protein] (N-glucan mannose isomer 5A1,2) + 4 beta-D-mannose. It carries out the reaction N(4)-(alpha-D-Man-(1-&gt;2)-alpha-D-Man-(1-&gt;2)-alpha-D-Man-(1-&gt;3)-[alpha-D-Man-(1-&gt;3)-[alpha-D-Man-(1-&gt;2)-alpha-D-Man-(1-&gt;6)]-alpha-D-Man-(1-&gt;6)]-beta-D-Man-(1-&gt;4)-beta-D-GlcNAc-(1-&gt;4)-beta-D-GlcNAc)-L-asparaginyl-[protein] (N-glucan mannose isomer 8A1,2,3B1,3) + 3 H2O = N(4)-(alpha-D-Man-(1-&gt;3)-[alpha-D-Man-(1-&gt;3)-[alpha-D-Man-(1-&gt;6)]-alpha-D-Man-(1-&gt;6)]-beta-D-Man-(1-&gt;4)-beta-D-GlcNAc-(1-&gt;4)-beta-D-GlcNAc)-L-asparaginyl-[protein] (N-glucan mannose isomer 5A1,2) + 3 beta-D-mannose. It functions in the pathway protein modification; protein glycosylation. Its activity is regulated as follows. Inhibited by both 1-deoxymannojirimycin and kifunensine. Its function is as follows. Involved in the maturation of Asn-linked oligosaccharides. Progressively trim alpha-1,2-linked mannose residues from Man(9)GlcNAc(2) to produce Man(5)GlcNAc(2). The sequence is that of Mannosyl-oligosaccharide 1,2-alpha-mannosidase IA (MAN1A1) from Homo sapiens (Human).